Consider the following 132-residue polypeptide: uncharacterized protein (132 aa).

This is an uncharacterized protein from Escherichia coli.